The primary structure comprises 88 residues: Small ribosomal subunit protein bS20 (88 aa).

It belongs to the bacterial ribosomal protein bS20 family.

Functionally, binds directly to 16S ribosomal RNA. The polypeptide is Small ribosomal subunit protein bS20 (Desulforamulus reducens (strain ATCC BAA-1160 / DSM 100696 / MI-1) (Desulfotomaculum reducens)).